A 1765-amino-acid chain; its full sequence is Tight junction protein ZO-1 (1765 aa).

The PDZ 1 domain occupies 23-110 (TVTLHRAPGF…NAKITIRRKK (88 aa)). A compositionally biased stretch (basic residues) spans 102–112 (AKITIRRKKKV). Residues 102-189 (AKITIRRKKK…QPAKPTKVTL (88 aa)) form a disordered region. The span at 123–136 (PVSDNEDDSYDEDV) shows a compositional bias: acidic residues. Serine 125 carries the post-translational modification Phosphoserine. Phosphotyrosine is present on tyrosine 132. A compositionally biased stretch (basic and acidic residues) spans 149 to 175 (RRGEKSWARDRSASRDRSLSPRSDRRS). Residues serine 175, serine 178, and serine 179 each carry the phosphoserine modification. Position 185 is a phosphothreonine (threonine 185). The 79-residue stretch at 186–264 (KVTLVKSRKN…KLKMVVQRDE (79 aa)) folds into the PDZ 2 domain. Serine 212 and serine 241 each carry phosphoserine. At threonine 267 the chain carries Phosphothreonine. Phosphoserine occurs at positions 275, 277, 280, 284, 290, 294, 297, 300, 323, 329, 334, 337, and 353. The segment at 296–363 (ASDHSVRSHD…TPVKHVDDHT (68 aa)) is disordered. The segment covering 299–308 (HSVRSHDRPP) has biased composition (basic and acidic residues). The segment covering 325 to 338 (HSTQSPQQPSNGSL) has biased composition (polar residues). Threonine 354 carries the post-translational modification Phosphothreonine. One can recognise a PDZ 3 domain in the interval 421 to 502 (SMKLVKFRKG…GEEVTILAQK (82 aa)). An SH3 domain is found at 516–584 (GDSFYIRTHF…PNKNRAEQLA (69 aa)). Serine 617 and serine 622 each carry phosphoserine. The interval 633-876 (YERVVLREAG…GTPPESAITR (244 aa)) is occludin (OCLN)-binding region. A Guanylate kinase-like domain is found at 690 to 791 (RLHTIKQIID…WYGALKEAIQ (102 aa)). A Phosphothreonine modification is found at threonine 809. 2 positions are modified to phosphoserine: serine 810 and serine 821. At tyrosine 822 the chain carries Phosphotyrosine. Serine 824, serine 828, and serine 837 each carry phosphoserine. Disordered stretches follow at residues 825–941 (APGS…PASS) and 1023–1042 (ALGH…YDPQ). Threonine 846, threonine 848, threonine 854, threonine 861, and threonine 868 each carry phosphothreonine. Basic and acidic residues predominate over residues 879–892 (EPVREDSSGMHHEN). The segment covering 893–906 (QTYPPYSPQAQPQA) has biased composition (low complexity). Serine 912 carries the post-translational modification Phosphoserine. Residue serine 1071 is modified to Phosphoserine. Positions 1092-1585 (SYYDDKQPYP…SSTQPPEFDS (494 aa)) are disordered. Positions 1106-1124 (DTQHPRDLDSRQHPEEASE) are enriched in basic and acidic residues. Phosphotyrosine occurs at positions 1139 and 1164. The actin-binding region (ABR) stretch occupies residues 1150–1370 (RTSTLRHEEQ…FDRRSFESKP (221 aa)). Composition is skewed to basic and acidic residues over residues 1268–1285 (KMFE…KDVN) and 1335–1346 (PPEDIVRSNHYD). Residue tyrosine 1353 is modified to Phosphotyrosine. A Phosphoserine modification is found at serine 1365. Low complexity predominate over residues 1388–1399 (SQSQPNFSSYSS). Residues 1401 to 1418 (GKPETDAMDRSFSEKRYD) show a composition bias toward basic and acidic residues. A Phosphoserine modification is found at serine 1411. 2 stretches are compositionally biased toward polar residues: residues 1442-1468 (NSSL…NSYI) and 1509-1519 (GAEQTQKTITP). Positions 1535–1544 (PFERKFESPK) are enriched in basic and acidic residues. Serine 1542 and serine 1614 each carry phosphoserine. The region spanning 1631–1765 (ATARGIFNSN…NCVSVLIDHF (135 aa)) is the ZU5 domain.

This sequence belongs to the MAGUK family. In terms of assembly, homodimer. Forms heterodimers TJP3. Forms a heterodimer (via PDZ2 domain) with TJP2/ZO2 (via PDZ2 domain). Interacts with OCLN. Interacts with CALM, claudins, CGN/cingulin, CXADR, GJA12, GJD3 and UBN1. Interacts (via ZU5 domain) with CDC42BPB and MYZAP. Interacts (via PDZ domain) with GJA1. Interacts (via PDZ domains) with ANKRD2. Interacts with BVES (via the C-terminus cytoplasmic tail). Interacts with HSPA4. Interacts with KIRREL1. Interacts with DLL1. Interacts with USP53 (via the C-terminal region). Interacts with DNMBP (via C-terminal domain); required for the apical cell-cell junction localization of DNMBP. Interacts with SPEF1. Interacts (via N-terminus) with CTNNA1. Interacts with CLDN18. Interacts with CLDN16 (via TRV motif); this is a prerequisite for anchoring of CLDN16 at the tight junction. Interacts with PKP1; the interaction facilitates TJP1/ZO-1 localization to the plasma membrane. Post-translationally, phosphorylated at tyrosine redidues in response to epidermal growth factor (EGF). This response is dependent on an intact actin microfilament system. Dephosphorylated by Ptprj.

It is found in the cell membrane. It localises to the cell junction. Its subcellular location is the tight junction. The protein resides in the gap junction. In terms of biological role, tjpP1, Tjp2, and Tjp3 are closely related scaffolding proteins that link tight junction (TJ) transmembrane proteins such as claudins, junctional adhesion molecules, and occludin to the actin cytoskeleton. The tight junction acts to limit movement of substances through the paracellular space and as a boundary between the compositionally distinct apical and basolateral plasma membrane domains of epithelial and endothelial cells. Necessary for lumenogenesis, and particularly efficient epithelial polarization and barrier formation. Plays a role in the regulation of cell migration by targeting Cdc42bpb to the leading edge of migrating cells. Plays an important role in podosome formation and associated function, thus regulating cell adhesion and matrix remodeling. With Tjp2 and Tjp3, participates in the junctional retention and stability of the transcription factor Dbpa, but is not involved in its shuttling to the nucleus. May play a role in mediating cell morphology changes during ameloblast differentiation via its role in tight junctions. The polypeptide is Tight junction protein ZO-1 (Rattus norvegicus (Rat)).